Here is a 318-residue protein sequence, read N- to C-terminus: Acetyl-coenzyme A carboxylase carboxyl transferase subunit alpha (318 aa).

The region spanning 34–295 (SIEEEITKLR…KATIKQQLAQ (262 aa)) is the CoA carboxyltransferase C-terminal domain.

This sequence belongs to the AccA family. As to quaternary structure, acetyl-CoA carboxylase is a heterohexamer composed of biotin carboxyl carrier protein (AccB), biotin carboxylase (AccC) and two subunits each of ACCase subunit alpha (AccA) and ACCase subunit beta (AccD).

The protein localises to the cytoplasm. The catalysed reaction is N(6)-carboxybiotinyl-L-lysyl-[protein] + acetyl-CoA = N(6)-biotinyl-L-lysyl-[protein] + malonyl-CoA. Its pathway is lipid metabolism; malonyl-CoA biosynthesis; malonyl-CoA from acetyl-CoA: step 1/1. Functionally, component of the acetyl coenzyme A carboxylase (ACC) complex. First, biotin carboxylase catalyzes the carboxylation of biotin on its carrier protein (BCCP) and then the CO(2) group is transferred by the carboxyltransferase to acetyl-CoA to form malonyl-CoA. In Pseudoalteromonas atlantica (strain T6c / ATCC BAA-1087), this protein is Acetyl-coenzyme A carboxylase carboxyl transferase subunit alpha.